We begin with the raw amino-acid sequence, 599 residues long: Bile salt-activated lipase (599 aa).

An N-terminal signal peptide occupies residues 1–20 (MGRLEVLFLGLTCCLAAACA). A disulfide bridge connects residues Cys-84 and Cys-100. An N-linked (GlcNAc...) asparagine glycan is attached at Asn-207. Ser-214 (acyl-ester intermediate) is an active-site residue. Cysteines 266 and 277 form a disulfide. Asn-325 carries N-linked (GlcNAc...) asparagine glycosylation. Active-site charge relay system residues include Asp-340 and His-455. The tract at residues 553–599 (TGDQDTLTPPEDDSEVAPDPPSDDSQVVPVPPTDDSVEAQMPATIGF) is disordered. Tandem repeats lie at residues 559-569 (LTPPEDDSEVA), 570-580 (PDPPSDDSQVV), and 581-588 (PVPPTDDS). Residues 559 to 588 (LTPPEDDSEVAPDPPSDDSQVVPVPPTDDS) are 4 X 11 AA tandem repeats, O-glycosylated region.

The protein belongs to the type-B carboxylesterase/lipase family. In terms of assembly, interacts with CLC. EXpressed by eosinophils.

Its subcellular location is the secreted. The enzyme catalyses a triacylglycerol + H2O = a diacylglycerol + a fatty acid + H(+). It catalyses the reaction 1,2,3-tri-(9Z-octadecenoyl)-glycerol + H2O = di-(9Z)-octadecenoylglycerol + (9Z)-octadecenoate + H(+). It carries out the reaction 1,2,3-trioctanoylglycerol + H2O = dioctanoylglycerol + octanoate + H(+). The catalysed reaction is a sterol ester + H2O = a sterol + a fatty acid + H(+). The enzyme catalyses an acetyl ester + H2O = an aliphatic alcohol + acetate + H(+). It catalyses the reaction a butanoate ester + H2O = an aliphatic alcohol + butanoate + H(+). It carries out the reaction 9-hexadecanoyloxy-octadecanoate + H2O = 9-hydroxy-octadecanoate + hexadecanoate + H(+). The catalysed reaction is 9-(9Z-octadecenoyloxy)-octadecanoate + H2O = 9-hydroxy-octadecanoate + (9Z)-octadecenoate + H(+). The enzyme catalyses cholesteryl (9Z-octadecenoate) + H2O = cholesterol + (9Z)-octadecenoate + H(+). It catalyses the reaction 1-hexadecanoyl-sn-glycero-3-phosphocholine + H2O = sn-glycerol 3-phosphocholine + hexadecanoate + H(+). It carries out the reaction 12-hexadecanoyloxy-octadecanoate + H2O = 12-hydroxyoctadecanoate + hexadecanoate + H(+). The catalysed reaction is 12-(9Z-octadecenoyloxy)-octadecanoate + H2O = 12-hydroxyoctadecanoate + (9Z)-octadecenoate + H(+). The enzyme catalyses 13-(9Z-octadecenoyloxy)-octadecanoate + H2O = 13-hydroxy-octadecanoate + (9Z)-octadecenoate + H(+). It catalyses the reaction 9-(9Z-hexadecenoyloxy)-octadecanoate + H2O = (9Z)-hexadecenoate + 9-hydroxy-octadecanoate + H(+). It carries out the reaction 12-(9Z-hexadecenoyloxy)-octadecanoate + H2O = 12-hydroxyoctadecanoate + (9Z)-hexadecenoate + H(+). The catalysed reaction is 13-(9Z-hexadecenoyloxy)-octadecanoate + H2O = 13-hydroxy-octadecanoate + (9Z)-hexadecenoate + H(+). The enzyme catalyses 12-octadecanoyloxy-octadecanoate + H2O = 12-hydroxyoctadecanoate + octadecanoate + H(+). It catalyses the reaction 13-octadecanoyloxy-octadecanoate + H2O = 13-hydroxy-octadecanoate + octadecanoate + H(+). It carries out the reaction 5-(9Z-hexadecenoyloxy)-octadecanoate + H2O = 5-hydroxy-octadecanoate + (9Z)-hexadecenoate + H(+). The catalysed reaction is 9-octadecanoyloxy-octadecanoate + H2O = 9-hydroxy-octadecanoate + octadecanoate + H(+). Activated by bile salts such as sodium taurocholate. Catalyzes the hydrolysis of a wide range of substrates including cholesteryl esters, phospholipids, lysophospholipids, di- and tri-acylglycerols, and fatty acid esters of hydroxy fatty acids (FAHFAs). Preferentially hydrolyzes FAHFAs with the ester bond further away from the carboxylate. Unsaturated FAHFAs are hydrolyzed more quickly than saturated FAHFAs. Has an essential role in the complete digestion of dietary lipids and their intestinal absorption, along with the absorption of fat-soluble vitamins. The sequence is that of Bile salt-activated lipase (Cel) from Mus musculus (Mouse).